Reading from the N-terminus, the 377-residue chain is NADP-dependent oxidoreductase lnbE (377 aa).

Residues 170–173 (GGNG), 257–263 (LTNPRVS), and 293–295 (SPV) contribute to the NADP(+) site.

The protein belongs to the NADP-dependent oxidoreductase L4BD family.

Its pathway is secondary metabolite biosynthesis. NADP-dependent oxidoreductase; part of the lnb gene cluster that mediates the biosynthesis of diastereomeric piperazines. Lna and lnb clusters encode sets of enzymes that produce overlapping sets of previously undescribed metabolites such as piperazinomycin-like metabolites or morpholine. The lna and lnb biosynthetic pathways appear to be part of a signaling network that controls the formation of sclerotia, a resilient overwintering structure. One primary function of the non-canonical nonribosomal peptide synthetases lnaA and lnbA consists in the reduction of L-tyrosine. The presence in the clusters of tailoring enzymes such as the oxidoreductases lnaB, lnbB, lnaE or lnbE, as well as of the cytochrome P450 monooxygenases lnaC, lnaD, or lnbC, might explain formation of various diastereomeric piperazines. In Aspergillus flavus (strain ATCC 200026 / FGSC A1120 / IAM 13836 / NRRL 3357 / JCM 12722 / SRRC 167), this protein is NADP-dependent oxidoreductase lnbE.